The sequence spans 373 residues: NAD(P)H-quinone oxidoreductase subunit 1 (373 aa).

Helical transmembrane passes span 28–48 (LLWL…GVLV), 98–118 (LLFT…WLII), 129–149 (VGVG…GLLM), 177–197 (LALA…VDIV), 205–225 (ILSW…ICAL), 267–287 (VLSA…PIPV), 309–329 (TVGI…AILL), and 348–368 (FLLP…LAFP).

The protein belongs to the complex I subunit 1 family. As to quaternary structure, NDH-1 is composed of at least 11 different subunits.

Its subcellular location is the cellular thylakoid membrane. It carries out the reaction a plastoquinone + NADH + (n+1) H(+)(in) = a plastoquinol + NAD(+) + n H(+)(out). It catalyses the reaction a plastoquinone + NADPH + (n+1) H(+)(in) = a plastoquinol + NADP(+) + n H(+)(out). In terms of biological role, NDH-1 shuttles electrons from an unknown electron donor, via FMN and iron-sulfur (Fe-S) centers, to quinones in the respiratory and/or the photosynthetic chain. The immediate electron acceptor for the enzyme in this species is believed to be plastoquinone. Couples the redox reaction to proton translocation, and thus conserves the redox energy in a proton gradient. This is NAD(P)H-quinone oxidoreductase subunit 1 from Synechococcus sp. (strain CC9605).